Consider the following 151-residue polypeptide: Ribosome maturation factor RimP (151 aa).

The protein belongs to the RimP family.

The protein resides in the cytoplasm. In terms of biological role, required for maturation of 30S ribosomal subunits. The sequence is that of Ribosome maturation factor RimP from Haemophilus influenzae (strain PittEE).